Here is a 342-residue protein sequence, read N- to C-terminus: 4-hydroxythreonine-4-phosphate dehydrogenase (342 aa).

Positions 139 and 140 each coordinate substrate. The a divalent metal cation site is built by His-174, His-219, and His-274. 3 residues coordinate substrate: Lys-282, Asn-291, and Arg-300.

It belongs to the PdxA family. In terms of assembly, homodimer. Zn(2+) is required as a cofactor. Mg(2+) serves as cofactor. The cofactor is Co(2+).

Its subcellular location is the cytoplasm. The catalysed reaction is 4-(phosphooxy)-L-threonine + NAD(+) = 3-amino-2-oxopropyl phosphate + CO2 + NADH. The protein operates within cofactor biosynthesis; pyridoxine 5'-phosphate biosynthesis; pyridoxine 5'-phosphate from D-erythrose 4-phosphate: step 4/5. Functionally, catalyzes the NAD(P)-dependent oxidation of 4-(phosphooxy)-L-threonine (HTP) into 2-amino-3-oxo-4-(phosphooxy)butyric acid which spontaneously decarboxylates to form 3-amino-2-oxopropyl phosphate (AHAP). The protein is 4-hydroxythreonine-4-phosphate dehydrogenase of Mesorhizobium japonicum (strain LMG 29417 / CECT 9101 / MAFF 303099) (Mesorhizobium loti (strain MAFF 303099)).